The primary structure comprises 355 residues: Phosphoribosylformylglycinamidine cyclo-ligase (355 aa).

It belongs to the AIR synthase family.

It localises to the cytoplasm. The catalysed reaction is 2-formamido-N(1)-(5-O-phospho-beta-D-ribosyl)acetamidine + ATP = 5-amino-1-(5-phospho-beta-D-ribosyl)imidazole + ADP + phosphate + H(+). It functions in the pathway purine metabolism; IMP biosynthesis via de novo pathway; 5-amino-1-(5-phospho-D-ribosyl)imidazole from N(2)-formyl-N(1)-(5-phospho-D-ribosyl)glycinamide: step 2/2. The polypeptide is Phosphoribosylformylglycinamidine cyclo-ligase (Paraburkholderia phytofirmans (strain DSM 17436 / LMG 22146 / PsJN) (Burkholderia phytofirmans)).